A 200-amino-acid polypeptide reads, in one-letter code: Probable GTP-binding protein EngB (200 aa).

The EngB-type G domain occupies 23-197 (KNSEVVFIGR…RERVLKDVLG (175 aa)). GTP contacts are provided by residues 31–38 (GRSNVGKS), 58–62 (GKTQL), 83–86 (DLPG), 153–156 (TKMD), and 175–177 (FTA). S38 and T60 together coordinate Mg(2+).

It belongs to the TRAFAC class TrmE-Era-EngA-EngB-Septin-like GTPase superfamily. EngB GTPase family. Mg(2+) serves as cofactor.

Its function is as follows. Necessary for normal cell division and for the maintenance of normal septation. The protein is Probable GTP-binding protein EngB of Wolinella succinogenes (strain ATCC 29543 / DSM 1740 / CCUG 13145 / JCM 31913 / LMG 7466 / NCTC 11488 / FDC 602W) (Vibrio succinogenes).